Here is a 193-residue protein sequence, read N- to C-terminus: Interleukin-18 (193 aa).

Positions 1-36 (MAANLIEDNCINLVKMKFVNNTLYFKAESDEGLESD) are excised as a propeptide.

It belongs to the IL-1 family. Forms a ternary complex with ligand-binding receptor subunit IL18R1 and signaling receptor subunit IL18RAP at the plasma membrane. Mature IL18 first binds to IL18R1 forming a low affinity binary complex, which then interacts with IL18RAP to form a high affinity ternary complex that signals inside the cell. Interacts with cargo receptor TMED10; the interaction mediates the translocation from the cytoplasm into the ERGIC (endoplasmic reticulum-Golgi intermediate compartment) and thereby secretion. Post-translationally, the pro-IL-18 precursor is processed by CASP1, CASP4 or CASP5 to yield its mature, active form. The pro-IL-18 precursor features autoinhibitory interactions between the propeptide and the post-cleavage-site region, preventing recognition by the IL18R1 receptor. Processing by CASP1, CASP4 or CASP5 induces conformational changes to generate critical receptor-binding sites. The mature form is then secreted and released in the extracellular milieu by passing through the gasdermin-D (GSDMD) pore. In contrast, cleavage by CASP3 inactivates IL18.

The protein resides in the cytoplasm. Its subcellular location is the cytosol. It is found in the secreted. Pro-inflammatory cytokine primarily involved in epithelial barrier repair, polarized T-helper 1 (Th1) cell and natural killer (NK) cell immune responses. Upon binding to IL18R1 and IL18RAP, forms a signaling ternary complex which activates NF-kappa-B, triggering synthesis of inflammatory mediators. Synergizes with IL12/interleukin-12 to induce IFNG synthesis from T-helper 1 (Th1) cells and natural killer (NK) cells. Involved in transduction of inflammation downstream of pyroptosis: its mature form is specifically released in the extracellular milieu by passing through the gasdermin-D (GSDMD) pore. This chain is Interleukin-18 (IL18), found in Canis lupus familiaris (Dog).